A 120-amino-acid chain; its full sequence is UPF0102 protein Pfl01_4685 (120 aa).

This sequence belongs to the UPF0102 family.

This Pseudomonas fluorescens (strain Pf0-1) protein is UPF0102 protein Pfl01_4685.